Here is a 457-residue protein sequence, read N- to C-terminus: 6-phosphofructo-2-kinase/fructose-2,6-bisphosphatase (457 aa).

The disordered stretch occupies residues 1–20 (MEIPPGLETTKRKVAHSDEH). Residues 1–244 (MEIPPGLETT…VYFLMNIHLL (244 aa)) are 6-phosphofructo-2-kinase. Residues 9–20 (TTKRKVAHSDEH) are compositionally biased toward basic and acidic residues. ATP is bound at residue 36 to 44 (GLPARGKTY). 2 residues coordinate beta-D-fructose 6-phosphate: Arg69 and Arg98. Asp124 is a catalytic residue. 2 residues coordinate beta-D-fructose 6-phosphate: Thr126 and Arg132. The active site involves Cys154. Position 163–168 (163–168 (NVTDVK)) interacts with ATP. Lys168, Arg190, and Tyr194 together coordinate beta-D-fructose 6-phosphate. The fructose-2,6-bisphosphatase stretch occupies residues 245–457 (PRSIYLTRHG…QLPLCDSPRD (213 aa)). Arg252 provides a ligand contact to beta-D-fructose 2,6-bisphosphate. The Tele-phosphohistidine intermediate role is filled by His253. Asn259 and Gly265 together coordinate beta-D-fructose 2,6-bisphosphate. The Proton donor/acceptor role is filled by Glu324. Residues Tyr335, Arg349, Lys353, Tyr364, Gln390, and Arg394 each contribute to the beta-D-fructose 2,6-bisphosphate site. An ATP-binding site is contributed by 346–349 (ADDR). Residues 390-394 (QAVLR) and Tyr426 each bind ATP.

This sequence in the C-terminal section; belongs to the phosphoglycerate mutase family.

The catalysed reaction is beta-D-fructose 2,6-bisphosphate + H2O = beta-D-fructose 6-phosphate + phosphate. The enzyme catalyses beta-D-fructose 6-phosphate + ATP = beta-D-fructose 2,6-bisphosphate + ADP + H(+). In terms of biological role, synthesis and degradation of fructose 2,6-bisphosphate. The sequence is that of 6-phosphofructo-2-kinase/fructose-2,6-bisphosphatase from Caenorhabditis elegans.